Reading from the N-terminus, the 111-residue chain is Nucleoid-associated protein Cag_1190 (111 aa).

Belongs to the YbaB/EbfC family. In terms of assembly, homodimer.

Its subcellular location is the cytoplasm. The protein localises to the nucleoid. Binds to DNA and alters its conformation. May be involved in regulation of gene expression, nucleoid organization and DNA protection. The polypeptide is Nucleoid-associated protein Cag_1190 (Chlorobium chlorochromatii (strain CaD3)).